The following is a 674-amino-acid chain: F420-dependent formate dehydrogenase 1 subunit alpha (674 aa).

The 4Fe-4S Mo/W bis-MGD-type domain maps to 3 to 59 (LDFIHTICPYCGTGCGVDLVVKDGTLVGTNPFKRHPVNEGKTCIKGSYCHEFVHRDD). Positions 10, 13, 17, and 45 each coordinate [4Fe-4S] cluster. Residue U132 is a non-standard amino acid, selenocysteine.

The protein belongs to the prokaryotic molybdopterin-containing oxidoreductase family. Dimer of an alpha (FdhA1) and a beta (FdhB1) subunit. It depends on [4Fe-4S] cluster as a cofactor. The cofactor is Mo-bis(molybdopterin guanine dinucleotide). Zn(2+) is required as a cofactor.

The enzyme catalyses oxidized coenzyme F420-(gamma-L-Glu)(n) + formate + 2 H(+) = reduced coenzyme F420-(gamma-L-Glu)(n) + CO2. In terms of biological role, catalyzes the oxidation of formate to carbon dioxide, with coenzyme F420 as the electron acceptor. In vitro can also use methyl viologen as electron acceptor. The sequence is that of F420-dependent formate dehydrogenase 1 subunit alpha from Methanococcus maripaludis (strain DSM 14266 / JCM 13030 / NBRC 101832 / S2 / LL).